Consider the following 221-residue polypeptide: Small ribosomal subunit protein uS3 (221 aa).

One can recognise a KH type-2 domain in the interval 39–107 (IRNYIKEKLY…TVILNIIEVK (69 aa)).

This sequence belongs to the universal ribosomal protein uS3 family. As to quaternary structure, part of the 30S ribosomal subunit. Forms a tight complex with proteins S10 and S14.

In terms of biological role, binds the lower part of the 30S subunit head. Binds mRNA in the 70S ribosome, positioning it for translation. This chain is Small ribosomal subunit protein uS3, found in Caldanaerobacter subterraneus subsp. tengcongensis (strain DSM 15242 / JCM 11007 / NBRC 100824 / MB4) (Thermoanaerobacter tengcongensis).